A 193-amino-acid chain; its full sequence is dCTP deaminase (193 aa).

DCTP is bound by residues 110–115 (RSSLAR), aspartate 128, 136–138 (VLE), tyrosine 171, lysine 178, and glutamine 182. The active-site Proton donor/acceptor is glutamate 138. Positions 171 to 193 (YHQRQDAKYHNQKGAVASRIDKD) are disordered.

Belongs to the dCTP deaminase family. Homotrimer.

The catalysed reaction is dCTP + H2O + H(+) = dUTP + NH4(+). The protein operates within pyrimidine metabolism; dUMP biosynthesis; dUMP from dCTP (dUTP route): step 1/2. Functionally, catalyzes the deamination of dCTP to dUTP. The protein is dCTP deaminase of Hamiltonella defensa subsp. Acyrthosiphon pisum (strain 5AT).